Reading from the N-terminus, the 185-residue chain is Ribosome-recycling factor (185 aa).

The protein belongs to the RRF family.

It localises to the cytoplasm. Responsible for the release of ribosomes from messenger RNA at the termination of protein biosynthesis. May increase the efficiency of translation by recycling ribosomes from one round of translation to another. This is Ribosome-recycling factor from Dehalococcoides mccartyi (strain ATCC BAA-2266 / KCTC 15142 / 195) (Dehalococcoides ethenogenes (strain 195)).